A 132-amino-acid polypeptide reads, in one-letter code: Small ribosomal subunit protein uS11 (132 aa).

The span at 1–16 (MAAGMKGKRSRRRKER) shows a compositional bias: basic residues. Residues 1–20 (MAAGMKGKRSRRRKERKNVE) are disordered.

The protein belongs to the universal ribosomal protein uS11 family. In terms of assembly, part of the 30S ribosomal subunit. Interacts with proteins S7 and S18. Binds to IF-3.

Its function is as follows. Located on the platform of the 30S subunit, it bridges several disparate RNA helices of the 16S rRNA. Forms part of the Shine-Dalgarno cleft in the 70S ribosome. The chain is Small ribosomal subunit protein uS11 from Clostridium botulinum (strain Kyoto / Type A2).